The primary structure comprises 223 residues: Ribosomal RNA small subunit methyltransferase G (223 aa).

Residues glycine 85, phenylalanine 90, and arginine 154 each coordinate S-adenosyl-L-methionine.

It belongs to the methyltransferase superfamily. RNA methyltransferase RsmG family.

The protein resides in the cytoplasm. The catalysed reaction is guanosine(527) in 16S rRNA + S-adenosyl-L-methionine = N(7)-methylguanosine(527) in 16S rRNA + S-adenosyl-L-homocysteine. In terms of biological role, specifically methylates the N7 position of guanine in position 527 of 16S rRNA. The chain is Ribosomal RNA small subunit methyltransferase G from Rhodopseudomonas palustris (strain ATCC BAA-98 / CGA009).